Reading from the N-terminus, the 320-residue chain is L-lactate dehydrogenase (320 aa).

Residues 15 to 16 (FV), Asp37, Lys42, Tyr68, and 82 to 83 (GA) each bind NAD(+). Residues Gln85, Arg91, and 123 to 126 (NPVD) contribute to the substrate site. NAD(+)-binding positions include 121-123 (ATN) and Ser146. A substrate-binding site is contributed by 151–154 (DSAR). Beta-D-fructose 1,6-bisphosphate is bound by residues Arg156 and 168–172 (QNVHA). The active-site Proton acceptor is His178. Phosphotyrosine is present on Tyr223. Thr232 is a binding site for substrate.

Belongs to the LDH/MDH superfamily. LDH family. In terms of assembly, homotetramer.

Its subcellular location is the cytoplasm. The enzyme catalyses (S)-lactate + NAD(+) = pyruvate + NADH + H(+). It participates in fermentation; pyruvate fermentation to lactate; (S)-lactate from pyruvate: step 1/1. Allosterically activated by fructose 1,6-bisphosphate (FBP). Functionally, catalyzes the conversion of lactate to pyruvate. This chain is L-lactate dehydrogenase, found in Bacillus subtilis (strain 168).